Reading from the N-terminus, the 308-residue chain is Ornithine carbamoyltransferase (308 aa).

Carbamoyl phosphate-binding positions include 56–59, Gln83, Arg107, and 134–137; these read STRT and HPCQ. Residues Asn165, Asp225, and 229–230 contribute to the L-ornithine site; that span reads SM. Carbamoyl phosphate is bound by residues 264–265 and Arg292; that span reads CL.

It belongs to the aspartate/ornithine carbamoyltransferase superfamily. OTCase family.

It is found in the cytoplasm. It carries out the reaction carbamoyl phosphate + L-ornithine = L-citrulline + phosphate + H(+). It participates in amino-acid biosynthesis; L-arginine biosynthesis; L-arginine from L-ornithine and carbamoyl phosphate: step 1/3. Functionally, reversibly catalyzes the transfer of the carbamoyl group from carbamoyl phosphate (CP) to the N(epsilon) atom of ornithine (ORN) to produce L-citrulline. This Nitrobacter winogradskyi (strain ATCC 25391 / DSM 10237 / CIP 104748 / NCIMB 11846 / Nb-255) protein is Ornithine carbamoyltransferase.